The sequence spans 406 residues: 2,3-bisphosphoglycerate-independent phosphoglycerate mutase (406 aa).

Positions 156-165 (ITEGDPHKEG) are enriched in basic and acidic residues. Residues 156-177 (ITEGDPHKEGVPIPEVKPLDNS) form a disordered region.

It belongs to the BPG-independent phosphoglycerate mutase family. A-PGAM subfamily.

The catalysed reaction is (2R)-2-phosphoglycerate = (2R)-3-phosphoglycerate. It functions in the pathway carbohydrate degradation; glycolysis; pyruvate from D-glyceraldehyde 3-phosphate: step 3/5. Functionally, catalyzes the interconversion of 2-phosphoglycerate and 3-phosphoglycerate. This chain is 2,3-bisphosphoglycerate-independent phosphoglycerate mutase, found in Methanococcus aeolicus (strain ATCC BAA-1280 / DSM 17508 / OCM 812 / Nankai-3).